The sequence spans 592 residues: V-type ATP synthase alpha chain (592 aa).

232 to 239 (GPFGSGKT) provides a ligand contact to ATP.

Belongs to the ATPase alpha/beta chains family.

It carries out the reaction ATP + H2O + 4 H(+)(in) = ADP + phosphate + 5 H(+)(out). In terms of biological role, produces ATP from ADP in the presence of a proton gradient across the membrane. The V-type alpha chain is a catalytic subunit. The protein is V-type ATP synthase alpha chain of Clostridioides difficile (strain 630) (Peptoclostridium difficile).